Reading from the N-terminus, the 396-residue chain is Cathepsin E (396 aa).

The first 19 residues, 1-19, serve as a signal peptide directing secretion; the sequence is MKTLLLLLLVLLELGEAQG. A propeptide spans 20 to 53 (activation peptide); sequence SLHRVPLRRHPSLKKKLRARSQLSEFWKSHNLDM. A Peptidase A1 domain is found at 78-396; the sequence is YFGTISIGSP…NRVGLAPAVP (319 aa). A glycan (N-linked (GlcNAc...) asparagine) is linked at Asn90. The active site involves Asp96. Cystine bridges form between Cys109-Cys114 and Cys272-Cys276. Residue Asp281 is part of the active site. A disulfide bond links Cys314 and Cys351.

Belongs to the peptidase A1 family. In terms of assembly, homodimer; disulfide-linked. In terms of processing, glycosylated. The nature of the carbohydrate chain varies between cell types. In fibroblasts, the proenzyme contains a high mannose-type oligosaccharide, while the mature enzyme contains a complex-type oligosaccharide. In erythrocyte membranes, both the proenzyme and mature enzyme contain a complex-type oligosaccharide. Two forms are produced by autocatalytic cleavage, form I begins at Ile-54, form II begins at Thr-57. As to expression, expressed abundantly in the stomach, the Clara cells of the lung and activated B-lymphocytes, and at lower levels in lymph nodes, skin and spleen. Not expressed in resting B-lymphocytes.

It localises to the endosome. It catalyses the reaction Similar to cathepsin D, but slightly broader specificity.. May have a role in immune function. Probably involved in the processing of antigenic peptides during MHC class II-mediated antigen presentation. May play a role in activation-induced lymphocyte depletion in the thymus, and in neuronal degeneration and glial cell activation in the brain. This chain is Cathepsin E (CTSE), found in Homo sapiens (Human).